The following is a 902-amino-acid chain: Cytosolic carboxypeptidase 2 (902 aa).

The Peptidase M14 domain maps to 396–666 (YPYTYTDLQC…HVCDTLLDFC (271 aa)). Zn(2+) is bound by residues histidine 462, glutamate 465, and histidine 558. Glutamate 630 acts as the Proton donor/acceptor in catalysis. Positions 746-758 (FKKKKKKSLQTRK) are enriched in basic residues. 2 disordered regions span residues 746 to 770 (FKKK…KNLM) and 796 to 879 (FKNS…PRSR). A compositionally biased stretch (polar residues) spans 853-866 (VSCSPKRTINSSQE).

The protein belongs to the peptidase M14 family. As to quaternary structure, interacts with RARRES1, KIF11 AND MAPRE1. Requires Zn(2+) as cofactor.

It is found in the cytoplasm. The protein localises to the cytosol. It localises to the cytoskeleton. Its subcellular location is the microtubule organizing center. The protein resides in the centrosome. It is found in the centriole. The protein localises to the cilium basal body. It catalyses the reaction (L-glutamyl)(n+1)-gamma-L-glutamyl-L-glutamyl-[protein] + H2O = (L-glutamyl)(n)-gamma-L-glutamyl-L-glutamyl-[protein] + L-glutamate. With respect to regulation, inhibited by RARRES1. Its function is as follows. Metallocarboxypeptidase that mediates deglutamylation of tubulin and non-tubulin target proteins. Catalyzes the removal of polyglutamate side chains present on the gamma-carboxyl group of glutamate residues within the C-terminal tail of tubulin protein. Specifically cleaves tubulin long-side-chains, while it is not able to remove the branching point glutamate. Also catalyzes the removal of polyglutamate residues from the carboxy-terminus of non-tubulin proteins such as MYLK. The polypeptide is Cytosolic carboxypeptidase 2 (Homo sapiens (Human)).